The chain runs to 271 residues: Tryptophan synthase alpha chain (271 aa).

Residues glutamate 49 and aspartate 60 each act as proton acceptor in the active site.

It belongs to the TrpA family. In terms of assembly, tetramer of two alpha and two beta chains.

It catalyses the reaction (1S,2R)-1-C-(indol-3-yl)glycerol 3-phosphate + L-serine = D-glyceraldehyde 3-phosphate + L-tryptophan + H2O. It functions in the pathway amino-acid biosynthesis; L-tryptophan biosynthesis; L-tryptophan from chorismate: step 5/5. In terms of biological role, the alpha subunit is responsible for the aldol cleavage of indoleglycerol phosphate to indole and glyceraldehyde 3-phosphate. This is Tryptophan synthase alpha chain from Rhizorhabdus wittichii (strain DSM 6014 / CCUG 31198 / JCM 15750 / NBRC 105917 / EY 4224 / RW1) (Sphingomonas wittichii).